A 272-amino-acid chain; its full sequence is Cytochrome c oxidase subunit 3 (272 aa).

Transmembrane regions (helical) follow at residues 20–40 (PWPLVAALGGLSLTFGGVLFM), 45–65 (GGGELLCLGFFTILYVMFTWW), 89–109 (GMILFIVSEIMFFFAFFWAFF), 128–148 (VVAISPWGLPFLNTILLLSSG), 166–186 (AMQGLSVTLAFAIAFTAMQGF), 204–224 (FYMATGFHGFHVIIGTIFLFI), and 248–268 (YWHFVDVVWLFLFLTIYWWGF).

It belongs to the cytochrome c oxidase subunit 3 family. Component of the cytochrome c oxidase (complex IV, CIV), a multisubunit enzyme composed of a catalytic core of 3 subunits and several supernumerary subunits. The complex exists as a monomer or a dimer and forms supercomplexes (SCs) in the inner mitochondrial membrane with ubiquinol-cytochrome c oxidoreductase (cytochrome b-c1 complex, complex III, CIII).

Its subcellular location is the mitochondrion inner membrane. The catalysed reaction is 4 Fe(II)-[cytochrome c] + O2 + 8 H(+)(in) = 4 Fe(III)-[cytochrome c] + 2 H2O + 4 H(+)(out). Functionally, component of the cytochrome c oxidase, the last enzyme in the mitochondrial electron transport chain which drives oxidative phosphorylation. The respiratory chain contains 3 multisubunit complexes succinate dehydrogenase (complex II, CII), ubiquinol-cytochrome c oxidoreductase (cytochrome b-c1 complex, complex III, CIII) and cytochrome c oxidase (complex IV, CIV), that cooperate to transfer electrons derived from NADH and succinate to molecular oxygen, creating an electrochemical gradient over the inner membrane that drives transmembrane transport and the ATP synthase. Cytochrome c oxidase is the component of the respiratory chain that catalyzes the reduction of oxygen to water. Electrons originating from reduced cytochrome c in the intermembrane space (IMS) are transferred via the dinuclear copper A center (CU(A)) of subunit 2 and heme A of subunit 1 to the active site in subunit 1, a binuclear center (BNC) formed by heme A3 and copper B (CU(B)). The BNC reduces molecular oxygen to 2 water molecules using 4 electrons from cytochrome c in the IMS and 4 protons from the mitochondrial matrix. The chain is Cytochrome c oxidase subunit 3 (COX3) from Pylaiella littoralis (Seaweed).